The chain runs to 435 residues: Proline and serine-rich protein 2 (435 aa).

The span at 1–10 (MPVTHRKSDA) shows a compositional bias: basic and acidic residues. The segment at 1–22 (MPVTHRKSDASDMNSDTSPSCR) is disordered. Ser-8 is modified (phosphoserine). Positions 11-20 (SDMNSDTSPS) are enriched in polar residues. The residue at position 43 (Ser-43) is a Phosphoserine. Thr-45 carries the phosphothreonine modification. Low complexity-rich tracts occupy residues 92–102 (PSLEESTSSPS) and 113–126 (PAPG…LPEG). 2 disordered regions span residues 92–276 (PSLE…RAAV) and 295–420 (AFPA…SEEA). Residue Thr-146 is modified to Phosphothreonine. Over residues 146-169 (TPPPPDPPAPETLLAPPPLPSTPD) the composition is skewed to pro residues. Ser-166 carries the phosphoserine modification. Position 167 is a phosphothreonine (Thr-167). Residues Ser-179, Ser-212, and Ser-215 each carry the phosphoserine modification. The span at 228-237 (PAARGPRSGD) shows a compositional bias: low complexity. At Arg-252 the chain carries Asymmetric dimethylarginine; alternate. Omega-N-methylarginine; alternate is present on Arg-252. Residues 302–311 (AGEGAPGGGS) show a composition bias toward gly residues. Ser-312 bears the Phosphoserine mark. Position 320 is an omega-N-methylarginine; alternate (Arg-320). Arg-320 bears the Dimethylated arginine; alternate mark. The residue at position 378 (Arg-378) is an Omega-N-methylarginine. Residue Ser-400 is modified to Phosphoserine. At Arg-414 the chain carries Omega-N-methylarginine.

In Homo sapiens (Human), this protein is Proline and serine-rich protein 2 (PROSER2).